Here is a 291-residue protein sequence, read N- to C-terminus: ATP synthase gamma chain (291 aa).

It belongs to the ATPase gamma chain family. In terms of assembly, F-type ATPases have 2 components, CF(1) - the catalytic core - and CF(0) - the membrane proton channel. CF(1) has five subunits: alpha(3), beta(3), gamma(1), delta(1), epsilon(1). CF(0) has three main subunits: a, b and c.

It localises to the cell inner membrane. Its function is as follows. Produces ATP from ADP in the presence of a proton gradient across the membrane. The gamma chain is believed to be important in regulating ATPase activity and the flow of protons through the CF(0) complex. In Pelodictyon phaeoclathratiforme (strain DSM 5477 / BU-1), this protein is ATP synthase gamma chain.